A 226-amino-acid polypeptide reads, in one-letter code: Lipid phosphate phosphatase gamma (226 aa).

Position 1 is an N-acetylmethionine (methionine 1). 5 consecutive transmembrane segments (helical) span residues 24–44, 52–72, 102–122, 128–148, and 152–174; these read LGHF…GGFV, ELQG…NEFI, FMFF…GFWF, WIMN…RVYL, and TVAQ…FWVV.

It belongs to the PA-phosphatase related phosphoesterase family. In terms of tissue distribution, expressed in root tips, root branch points, vascular tissue of cotyledons and leaves, pistil, anthers and filaments.

The protein resides in the plastid. It is found in the chloroplast inner membrane. Inhibited by Mg(2+). In terms of biological role, exhibits phosphatidate phosphatase (PAP) activity in vitro. May play a primary role as PAP in plastids. The sequence is that of Lipid phosphate phosphatase gamma (LPPG) from Arabidopsis thaliana (Mouse-ear cress).